The chain runs to 266 residues: Diphthine synthase (266 aa).

S-adenosyl-L-methionine-binding positions include Leu-9, Asp-84, Val-87, 112–113 (SI), Leu-169, Ala-210, and His-235.

This sequence belongs to the diphthine synthase family. As to quaternary structure, homodimer.

The catalysed reaction is 2-[(3S)-amino-3-carboxypropyl]-L-histidyl-[translation elongation factor 2] + 3 S-adenosyl-L-methionine = diphthine-[translation elongation factor 2] + 3 S-adenosyl-L-homocysteine + 3 H(+). The protein operates within protein modification; peptidyl-diphthamide biosynthesis. In terms of biological role, S-adenosyl-L-methionine-dependent methyltransferase that catalyzes the trimethylation of the amino group of the modified target histidine residue in translation elongation factor 2 (EF-2), to form an intermediate called diphthine. The three successive methylation reactions represent the second step of diphthamide biosynthesis. The sequence is that of Diphthine synthase from Methanosarcina barkeri (strain Fusaro / DSM 804).